Reading from the N-terminus, the 90-residue chain is Large ribosomal subunit protein bL27 (90 aa).

A disordered region spans residues 1 to 21; the sequence is MASKKAGGSTRNGRDSEAKRL.

This sequence belongs to the bacterial ribosomal protein bL27 family.

This chain is Large ribosomal subunit protein bL27, found in Neisseria meningitidis serogroup C (strain 053442).